The sequence spans 492 residues: GTPase Der (492 aa).

2 consecutive EngA-type G domains span residues 3–166 (PVVA…MDDV) and 205–378 (IKLA…DSST). Residues 9 to 16 (GRPNVGKS), 56 to 60 (DTGGI), 118 to 121 (NKTD), 211 to 218 (GRPNVGKS), 258 to 262 (DTAGV), and 323 to 326 (NKWD) contribute to the GTP site. The KH-like domain occupies 379-463 (RRVSTALLTR…PIRIQFKEGA (85 aa)).

It belongs to the TRAFAC class TrmE-Era-EngA-EngB-Septin-like GTPase superfamily. EngA (Der) GTPase family. In terms of assembly, associates with the 50S ribosomal subunit.

Functionally, GTPase that plays an essential role in the late steps of ribosome biogenesis. In Cronobacter sakazakii (strain ATCC BAA-894) (Enterobacter sakazakii), this protein is GTPase Der.